The sequence spans 463 residues: Female germline-specific tumor suppressor gld-1 (463 aa).

The span at 1 to 10 (MPSCTTPTYG) shows a compositional bias: polar residues. The disordered stretch occupies residues 1–76 (MPSCTTPTYG…RAPPPARLTL (76 aa)). Over residues 11 to 31 (VSTQLESQSSESPSRSSVMTP) the composition is skewed to low complexity. Residues 135 to 205 (PTATEPIEVE…PEPAGDMISI (71 aa)) are qua1 domain; involved in homodimerization. Residues 208–260 (KIYVPKNEYPDYNFVGRILGPRGMTAKQLEQDTGCKIMVRGKGSMRDKSKESA) enclose the KH domain. The segment at 305 to 336 (APEGTDELKRKQLMELAIINGTYRPMKSPNPA) is qua2 domain; involved in RNA binding. Residues 443 to 463 (NTNVSPSGASPSASSVNNTSF) are disordered. Over residues 447–457 (SPSGASPSASS) the composition is skewed to low complexity.

Homodimer. In terms of processing, phosphorylated by cdk-2 which may negatively regulate its expression in distal mitotic germline cells. Post-translationally, undergoes proteasomal degradation in proximal oocytes following mating. In terms of tissue distribution, expressed in proximal and distal oocytes in female worms but is eliminated from proximal oocytes following mating.

RNA-binding protein which recognizes the 5'-UACUCAU-3' RNA consensus sequence. Binds sequences in both the 5'coding and the 3'-UTR region of rme-2 mRNA. Binds sequences in the 3'-UTR region of cye-1 mRNA. Binds to cyb-2.1, cyb-2.2 and cyb-3 mRNA. Binds sequences in the 3'-UTR region of tra-2 mRNA. Binds to the 3' UTR of Notch receptor homolog glp-1, thereby repressing glp-1 translation in the embryo. Binding to the glp-1 3' UTR is inhibited by pos-1 binding to an overlapping binding site in the glp-1 3' UTR. Germ line-specific tumor suppressor essential for oogenesis. Controls the spatial pattern of translation of multiple oogenesis specific mRNAs (e.g. yolk receptor rme-2) by repression of translation during early meiotic prophase (leptotene to pachytene) and then derepression of translation during diplotene/ diakinesis, following its degradation. Also functions to promote the male sexual fate in the hermaphrodite germline but not the male germline. Represses translation of the vacuolar ATPase component vha-13 in the distal gonad. Functions redundantly with gld-2 to promote the initiation of meiotic development and/or inhibit stem cell proliferation. By regulating cye-1 expression, prevents entry into mitosis in meiotic germline cells. The polypeptide is Female germline-specific tumor suppressor gld-1 (gld-1) (Caenorhabditis elegans).